We begin with the raw amino-acid sequence, 613 residues long: Glutamyl-tRNA(Gln) amidotransferase subunit E (613 aa).

It belongs to the GatB/GatE family. GatE subfamily. As to quaternary structure, heterodimer of GatD and GatE.

The catalysed reaction is L-glutamyl-tRNA(Gln) + L-glutamine + ATP + H2O = L-glutaminyl-tRNA(Gln) + L-glutamate + ADP + phosphate + H(+). In terms of biological role, allows the formation of correctly charged Gln-tRNA(Gln) through the transamidation of misacylated Glu-tRNA(Gln) in organisms which lack glutaminyl-tRNA synthetase. The reaction takes place in the presence of glutamine and ATP through an activated gamma-phospho-Glu-tRNA(Gln). The GatDE system is specific for glutamate and does not act on aspartate. This chain is Glutamyl-tRNA(Gln) amidotransferase subunit E, found in Archaeoglobus fulgidus (strain ATCC 49558 / DSM 4304 / JCM 9628 / NBRC 100126 / VC-16).